The sequence spans 347 residues: DNA-directed RNA polymerase subunit alpha (347 aa).

Residues 1-226 (MLISQRPTLS…ELFGLARELN (226 aa)) are alpha N-terminal domain (alpha-NTD). An alpha C-terminal domain (alpha-CTD) region spans residues 243 to 347 (HIASFALPID…SQDYAETEQL (105 aa)). The interval 326–347 (TTGTWSTDGAYDSQDYAETEQL) is disordered.

It belongs to the RNA polymerase alpha chain family. Homodimer. The RNAP catalytic core consists of 2 alpha, 1 beta, 1 beta' and 1 omega subunit. When a sigma factor is associated with the core the holoenzyme is formed, which can initiate transcription.

It carries out the reaction RNA(n) + a ribonucleoside 5'-triphosphate = RNA(n+1) + diphosphate. DNA-dependent RNA polymerase catalyzes the transcription of DNA into RNA using the four ribonucleoside triphosphates as substrates. This is DNA-directed RNA polymerase subunit alpha from Mycobacterium leprae (strain TN).